The primary structure comprises 454 residues: tRNA modification GTPase MnmE (454 aa).

Positions 23, 80, and 120 each coordinate (6S)-5-formyl-5,6,7,8-tetrahydrofolate. A TrmE-type G domain is found at 216–377; sequence GMKVVIAGRP…LRDHLKQSMG (162 aa). Asparagine 226 contributes to the K(+) binding site. Residues 226 to 231, 245 to 251, 270 to 273, 335 to 338, and 358 to 360 contribute to the GTP site; these read NAGKSS, TDIAGTT, DTAG, NKAD, and SAR. Mg(2+) is bound at residue serine 230. K(+) contacts are provided by threonine 245, isoleucine 247, and threonine 250. Threonine 251 is a Mg(2+) binding site. Residue lysine 454 participates in (6S)-5-formyl-5,6,7,8-tetrahydrofolate binding.

Belongs to the TRAFAC class TrmE-Era-EngA-EngB-Septin-like GTPase superfamily. TrmE GTPase family. In terms of assembly, homodimer. Heterotetramer of two MnmE and two MnmG subunits. The cofactor is K(+).

It localises to the cytoplasm. Exhibits a very high intrinsic GTPase hydrolysis rate. Involved in the addition of a carboxymethylaminomethyl (cmnm) group at the wobble position (U34) of certain tRNAs, forming tRNA-cmnm(5)s(2)U34. This Yersinia pseudotuberculosis serotype O:3 (strain YPIII) protein is tRNA modification GTPase MnmE.